The chain runs to 310 residues: Ribose-phosphate pyrophosphokinase (310 aa).

Residues 34-36 and 93-94 each bind ATP; these read DME and RQ. Residues H127 and D167 each coordinate Mg(2+). K190 is an active-site residue. D-ribose 5-phosphate is bound by residues R192, D216, and 220-224; that span reads DSGGT.

The protein belongs to the ribose-phosphate pyrophosphokinase family. Class I subfamily. In terms of assembly, homohexamer. Mg(2+) is required as a cofactor.

The protein resides in the cytoplasm. The enzyme catalyses D-ribose 5-phosphate + ATP = 5-phospho-alpha-D-ribose 1-diphosphate + AMP + H(+). It participates in metabolic intermediate biosynthesis; 5-phospho-alpha-D-ribose 1-diphosphate biosynthesis; 5-phospho-alpha-D-ribose 1-diphosphate from D-ribose 5-phosphate (route I): step 1/1. Functionally, involved in the biosynthesis of the central metabolite phospho-alpha-D-ribosyl-1-pyrophosphate (PRPP) via the transfer of pyrophosphoryl group from ATP to 1-hydroxyl of ribose-5-phosphate (Rib-5-P). The protein is Ribose-phosphate pyrophosphokinase of Granulibacter bethesdensis (strain ATCC BAA-1260 / CGDNIH1).